A 196-amino-acid polypeptide reads, in one-letter code: Nodulation protein A (196 aa).

It belongs to the NodA family.

It is found in the cytoplasm. In terms of biological role, N-acyltransferase required for nodulation. Acts in the production of a small, heat-stable compound (Nod) that stimulates mitosis in various plant protoplasts. This chain is Nodulation protein A, found in Mesorhizobium sp. (strain 7653R).